Reading from the N-terminus, the 279-residue chain is Bifunctional protein FolD 1 (279 aa).

NADP(+) is bound by residues 166–168 (GRS) and Ser191.

Belongs to the tetrahydrofolate dehydrogenase/cyclohydrolase family. Homodimer.

It carries out the reaction (6R)-5,10-methylene-5,6,7,8-tetrahydrofolate + NADP(+) = (6R)-5,10-methenyltetrahydrofolate + NADPH. It catalyses the reaction (6R)-5,10-methenyltetrahydrofolate + H2O = (6R)-10-formyltetrahydrofolate + H(+). It functions in the pathway one-carbon metabolism; tetrahydrofolate interconversion. Functionally, catalyzes the oxidation of 5,10-methylenetetrahydrofolate to 5,10-methenyltetrahydrofolate and then the hydrolysis of 5,10-methenyltetrahydrofolate to 10-formyltetrahydrofolate. In Salinispora arenicola (strain CNS-205), this protein is Bifunctional protein FolD 1.